An 849-amino-acid chain; its full sequence is Protein translocase subunit SecA (849 aa).

Residues Gln85, 103-107 (GEGKT), and Asp493 each bind ATP. The Zn(2+) site is built by Cys832, Cys834, Cys843, and His844.

It belongs to the SecA family. In terms of assembly, monomer and homodimer. Part of the essential Sec protein translocation apparatus which comprises SecA, SecYEG and auxiliary proteins SecDF. Other proteins may also be involved. Zn(2+) is required as a cofactor.

It localises to the cell membrane. The protein resides in the cytoplasm. The catalysed reaction is ATP + H2O + cellular proteinSide 1 = ADP + phosphate + cellular proteinSide 2.. Its function is as follows. Part of the Sec protein translocase complex. Interacts with the SecYEG preprotein conducting channel. Has a central role in coupling the hydrolysis of ATP to the transfer of proteins into and across the cell membrane, serving as an ATP-driven molecular motor driving the stepwise translocation of polypeptide chains across the membrane. In Streptococcus thermophilus (strain ATCC BAA-250 / LMG 18311), this protein is Protein translocase subunit SecA.